A 256-amino-acid chain; its full sequence is 5-keto-4-deoxy-D-glucarate aldolase (256 aa).

Residue H50 is the Proton acceptor of the active site. Q151 contributes to the substrate binding site. A Mg(2+)-binding site is contributed by E153. Substrate-binding residues include S178 and D179. D179 lines the Mg(2+) pocket.

This sequence belongs to the HpcH/HpaI aldolase family. KDGluc aldolase subfamily. In terms of assembly, homohexamer; trimer of dimers. It depends on Mg(2+) as a cofactor.

The enzyme catalyses 5-dehydro-4-deoxy-D-glucarate = 2-hydroxy-3-oxopropanoate + pyruvate. It catalyses the reaction 2-dehydro-3-deoxy-D-glucarate = 2-hydroxy-3-oxopropanoate + pyruvate. Its pathway is carbohydrate acid metabolism; galactarate degradation; D-glycerate from galactarate: step 2/3. Functionally, catalyzes the reversible retro-aldol cleavage of both 5-keto-4-deoxy-D-glucarate and 2-keto-3-deoxy-D-glucarate to pyruvate and tartronic semialdehyde. This chain is 5-keto-4-deoxy-D-glucarate aldolase, found in Escherichia coli O6:H1 (strain CFT073 / ATCC 700928 / UPEC).